The sequence spans 138 residues: ATP synthase epsilon chain (138 aa).

This sequence belongs to the ATPase epsilon chain family. F-type ATPases have 2 components, CF(1) - the catalytic core - and CF(0) - the membrane proton channel. CF(1) has five subunits: alpha(3), beta(3), gamma(1), delta(1), epsilon(1). CF(0) has three main subunits: a, b and c.

It localises to the cell inner membrane. In terms of biological role, produces ATP from ADP in the presence of a proton gradient across the membrane. This chain is ATP synthase epsilon chain, found in Ruthia magnifica subsp. Calyptogena magnifica.